The chain runs to 181 residues: Mitochondrial inner membrane protein Mpv17 (181 aa).

The next 4 helical transmembrane spans lie at 20–37 (MCIA…AQYL), 51–67 (FSFL…FIWF), 86–103 (LCID…AILF), and 152–169 (VILN…LSYI).

The protein belongs to the peroxisomal membrane protein PXMP2/4 family.

Its subcellular location is the mitochondrion inner membrane. In terms of biological role, involved in mitochondria homeostasis. The chain is Mitochondrial inner membrane protein Mpv17 from Caenorhabditis elegans.